Reading from the N-terminus, the 575-residue chain is DNA mismatch repair protein MutL (575 aa).

It belongs to the DNA mismatch repair MutL/HexB family.

This protein is involved in the repair of mismatches in DNA. It is required for dam-dependent methyl-directed DNA mismatch repair. May act as a 'molecular matchmaker', a protein that promotes the formation of a stable complex between two or more DNA-binding proteins in an ATP-dependent manner without itself being part of a final effector complex. This Coxiella burnetii (strain CbuG_Q212) (Coxiella burnetii (strain Q212)) protein is DNA mismatch repair protein MutL.